The primary structure comprises 840 residues: N-acetyltransferase ESCO1 (840 aa).

Positions 1 to 25 (MMSIQEKSKENSSKVTKKSDDKNSE) are enriched in basic and acidic residues. The interval 1–188 (MMSIQEKSKE…VLEVKSDSKE (188 aa)) is disordered. Composition is skewed to polar residues over residues 46 to 58 (KSQAKSSSESKIN), 65 to 74 (RMSTRSSKAA), and 81 to 96 (KSINKNTVTVRGYSQE). The span at 131–140 (VSRRSLRSRE) shows a compositional bias: basic and acidic residues. Residues 141 to 153 (IQGQVQAVKQSLP) are compositionally biased toward polar residues. Residues 161–170 (SSTQSKSNKT) show a composition bias toward low complexity. The span at 178 to 188 (KVLEVKSDSKE) shows a compositional bias: basic and acidic residues. Ser-200 is modified (phosphoserine). Disordered stretches follow at residues 221-300 (TQGS…KSKR) and 318-338 (NVEVKKESSQMESVKEEKPTE). Polar residues predominate over residues 267 to 278 (HTQVNTNTTLPK). A compositionally biased stretch (basic and acidic residues) spans 319-338 (VEVKKESSQMESVKEEKPTE). A Glycyl lysine isopeptide (Lys-Gly) (interchain with G-Cter in SUMO2) cross-link involves residue Lys-332. Ser-412 bears the Phosphoserine mark. Disordered regions lie at residues 486-505 (ANEIKPSDPPLDNQMKHSFD) and 542-582 (TGEN…KCNS). Positions 551–565 (APQQHSILSNQTSKS) are enriched in polar residues. The segment at 617 to 641 (VSCNVCGMLYTASNPEDETQHLLFH) adopts a CCHH-type zinc-finger fold. Acetyl-CoA-binding positions include 772–774 (IWV), 780–785 (RKKIAS), and 812–814 (TPD).

Belongs to the acetyltransferase family. ECO subfamily. As to quaternary structure, the subunit structure is controversial. Monomer. Homodimer. In terms of processing, phosphorylated during mitosis, when associated with chromosomes. As to expression, widely expressed. Expressed in heart, brain, liver, placenta, lung, kidney and pancreas. Highly expressed in muscle.

Its subcellular location is the nucleus. The protein localises to the chromosome. It catalyses the reaction L-lysyl-[protein] + acetyl-CoA = N(6)-acetyl-L-lysyl-[protein] + CoA + H(+). Its function is as follows. Acetyltransferase required for the establishment of sister chromatid cohesion. Couples the processes of cohesion and DNA replication to ensure that only sister chromatids become paired together. In contrast to the structural cohesins, the deposition and establishment factors are required only during S phase. Acts by mediating the acetylation of cohesin component SMC3. In Homo sapiens (Human), this protein is N-acetyltransferase ESCO1 (ESCO1).